Here is a 270-residue protein sequence, read N- to C-terminus: NAD(P)H-hydrate epimerase (270 aa).

The YjeF N-terminal domain occupies 25-234 (FQQLMDLMQN…DLLAPEEIYQ (210 aa)). Residue 73-77 (DNGGQ) coordinates (6S)-NADPHX. Residues N74 and D144 each contribute to the K(+) site. (6S)-NADPHX contacts are provided by residues 148 to 154 (GVGLYGH) and E177. T180 provides a ligand contact to K(+).

It belongs to the NnrE/AIBP family. The cofactor is K(+).

The catalysed reaction is (6R)-NADHX = (6S)-NADHX. It carries out the reaction (6R)-NADPHX = (6S)-NADPHX. Functionally, catalyzes the epimerization of the S- and R-forms of NAD(P)HX, a damaged form of NAD(P)H that is a result of enzymatic or heat-dependent hydration. This is a prerequisite for the S-specific NAD(P)H-hydrate dehydratase to allow the repair of both epimers of NAD(P)HX. The polypeptide is NAD(P)H-hydrate epimerase (Legionella pneumophila (strain Paris)).